Consider the following 812-residue polypeptide: Probable inorganic carbon transporter subunit DabA (812 aa).

Cys337, Asp339, His499, and Cys514 together coordinate Zn(2+).

The protein belongs to the inorganic carbon transporter (TC 9.A.2) DabA family. In terms of assembly, forms a complex with DabB. Zn(2+) is required as a cofactor.

Its subcellular location is the cell inner membrane. Its function is as follows. Part of an energy-coupled inorganic carbon pump. This chain is Probable inorganic carbon transporter subunit DabA, found in Xanthomonas euvesicatoria pv. vesicatoria (strain 85-10) (Xanthomonas campestris pv. vesicatoria).